Reading from the N-terminus, the 545-residue chain is MVTIVLNKYKLLDKIHIGQQKLEDLLFNLKSEVKPIDENNIEIEINADRLDLLSSDGIARAIKGLLEKELGEAKYNVTDTEYTLIVDNVRTRPYALAAIVYNAKIDLEELIQFQEKLHGTIGRKRKKVAIGIHDLRKVDSKTIEYKEVPLSYKFVPLYGNKELTISEILEKTEQGKLYGNISIANGVSPAIVQDDGEVLSIPPIINSNKTRLDENTKDFFIDVTGTSFEAVAQTLDIIVSNLAEAGGTIGRVKVLKSANSSQLSSPLFLHKIQNVREEYVKKILGIKTSKEEICKHVMRMRMNCDIENGVIRVTVPQYRVDILNEIDVVEDIAMSIGYNNLEPSKYISTNYGSYDYMTLLERKIRELGIGAGYVEISNFVLIKDEKLFSNKYVKILNPVTEEYNAVRDSLIPGLLDFLSKNQHAKFPIRVFETGDVVVYDSSTDTGFRNDKRAAYAIMDNKVSYEDIQAPIHYILKSLGLEVNYKEENNNIFIEGRSASIFYENEKMGVIGEVNPDVLIRFGIEYPAVIAELYISEIGKRLTNQR.

Positions 268–343 (FLHKIQNVRE…MSIGYNNLEP (76 aa)) constitute a B5 domain. The Mg(2+) site is built by Asp321, Asp327, Glu330, and Asp331.

The protein belongs to the phenylalanyl-tRNA synthetase beta subunit family. Type 2 subfamily. In terms of assembly, tetramer of two alpha and two beta subunits. It depends on Mg(2+) as a cofactor.

The protein resides in the cytoplasm. It carries out the reaction tRNA(Phe) + L-phenylalanine + ATP = L-phenylalanyl-tRNA(Phe) + AMP + diphosphate + H(+). The protein is Phenylalanine--tRNA ligase beta subunit of Saccharolobus islandicus (strain Y.N.15.51 / Yellowstone #2) (Sulfolobus islandicus).